The sequence spans 305 residues: Dihydroorotate dehydrogenase B (NAD(+)), catalytic subunit (305 aa).

FMN is bound by residues Ser-23 and 47–48; that span reads KG. Substrate is bound by residues Lys-47 and 71–75; that span reads NAIGL. Residues Asn-101 and Asn-129 each contribute to the FMN site. Asn-129 contributes to the substrate binding site. Cys-132 (nucleophile) is an active-site residue. FMN is bound by residues Lys-167 and Ile-193. 194–195 is a substrate binding site; sequence NT. FMN contacts are provided by residues Gly-219, 245–246, and 267–268; these read GG and GT.

This sequence belongs to the dihydroorotate dehydrogenase family. Type 1 subfamily. In terms of assembly, heterotetramer of 2 PyrK and 2 PyrD type B subunits. FMN serves as cofactor.

The protein localises to the cytoplasm. The enzyme catalyses (S)-dihydroorotate + NAD(+) = orotate + NADH + H(+). Its pathway is pyrimidine metabolism; UMP biosynthesis via de novo pathway; orotate from (S)-dihydroorotate (NAD(+) route): step 1/1. Functionally, catalyzes the conversion of dihydroorotate to orotate with NAD(+) as electron acceptor. In Geobacter metallireducens (strain ATCC 53774 / DSM 7210 / GS-15), this protein is Dihydroorotate dehydrogenase B (NAD(+)), catalytic subunit (pyrD).